Reading from the N-terminus, the 306-residue chain is ATP synthase F(1) complex subunit gamma, mitochondrial (306 aa).

A mitochondrion-targeting transit peptide spans 1-17 (MNSASKLFVVLASPANQ).

The protein belongs to the ATPase gamma chain family. As to quaternary structure, component of the ATP synthase complex composed at least of ATP5F1A/subunit alpha, ATP5F1B/subunit beta, ATP5MC1/subunit c (homooctomer), MT-ATP6/subunit a, MT-ATP8/subunit 8, ATP5ME/subunit e, ATP5MF/subunit f, ATP5MG/subunit g, ATP5MK/subunit k, ATP5MJ/subunit j, ATP5F1C/subunit gamma, ATP5F1D/subunit delta, ATP5F1E/subunit epsilon, ATP5PF/subunit F6, ATP5PB/subunit b, ATP5PD/subunit d, ATP5PO/subunit OSCP. ATP synthase complex consists of a soluble F(1) head domain (subunits alpha(3) and beta(3)) - the catalytic core - and a membrane F(0) domain - the membrane proton channel (subunits c, a, 8, e, f, g, k and j). These two domains are linked by a central stalk (subunits gamma, delta, and epsilon) rotating inside the F1 region and a stationary peripheral stalk (subunits F6, b, d, and OSCP).

The protein resides in the mitochondrion inner membrane. Subunit gamma, of the mitochondrial membrane ATP synthase complex (F(1)F(0) ATP synthase or Complex V) that produces ATP from ADP in the presence of a proton gradient across the membrane which is generated by electron transport complexes of the respiratory chain. ATP synthase complex consist of a soluble F(1) head domain - the catalytic core - and a membrane F(1) domain - the membrane proton channel. These two domains are linked by a central stalk rotating inside the F(1) region and a stationary peripheral stalk. During catalysis, ATP synthesis in the catalytic domain of F(1) is coupled via a rotary mechanism of the central stalk subunits to proton translocation. In vivo, can only synthesize ATP although its ATP hydrolase activity can be activated artificially in vitro. With the central stalk subunit delta, is essential for the biogenesis of F(1) catalytic part of the ATP synthase complex namely in the formation of F1 assembly intermediate. The polypeptide is ATP synthase F(1) complex subunit gamma, mitochondrial (Dictyostelium discoideum (Social amoeba)).